A 170-amino-acid chain; its full sequence is ATP synthase subunit b (170 aa).

Residues 3–23 form a helical membrane-spanning segment; it reads IKILFFLALPFLAYASEHGGT.

The protein belongs to the ATPase B chain family. In terms of assembly, F-type ATPases have 2 components, F(1) - the catalytic core - and F(0) - the membrane proton channel. F(1) has five subunits: alpha(3), beta(3), gamma(1), delta(1), epsilon(1). F(0) has three main subunits: a(1), b(2) and c(10-14). The alpha and beta chains form an alternating ring which encloses part of the gamma chain. F(1) is attached to F(0) by a central stalk formed by the gamma and epsilon chains, while a peripheral stalk is formed by the delta and b chains.

The protein localises to the cell inner membrane. F(1)F(0) ATP synthase produces ATP from ADP in the presence of a proton or sodium gradient. F-type ATPases consist of two structural domains, F(1) containing the extramembraneous catalytic core and F(0) containing the membrane proton channel, linked together by a central stalk and a peripheral stalk. During catalysis, ATP synthesis in the catalytic domain of F(1) is coupled via a rotary mechanism of the central stalk subunits to proton translocation. In terms of biological role, component of the F(0) channel, it forms part of the peripheral stalk, linking F(1) to F(0). The sequence is that of ATP synthase subunit b from Campylobacter concisus (strain 13826).